Reading from the N-terminus, the 465-residue chain is Cysteine--tRNA ligase (465 aa).

Cysteine 29 lines the Zn(2+) pocket. The 'HIGH' region motif lies at 31 to 41 (PTVYNYIHIGN). 3 residues coordinate Zn(2+): cysteine 209, histidine 234, and glutamate 238. Residues 266 to 270 (KMSKS) carry the 'KMSKS' region motif. Lysine 269 is a binding site for ATP. Position 270 is a phosphoserine (serine 270).

Belongs to the class-I aminoacyl-tRNA synthetase family. In terms of assembly, monomer. Requires Zn(2+) as cofactor.

The protein resides in the cytoplasm. It carries out the reaction tRNA(Cys) + L-cysteine + ATP = L-cysteinyl-tRNA(Cys) + AMP + diphosphate. This is Cysteine--tRNA ligase from Bacillus cereus (strain G9842).